The primary structure comprises 479 residues: Ribulose bisphosphate carboxylase large chain (479 aa).

A propeptide spanning residues 1–2 (MS) is cleaved from the precursor. Pro3 bears the N-acetylproline mark. Lys14 carries the N6,N6,N6-trimethyllysine modification. Positions 123 and 173 each coordinate substrate. Lys175 functions as the Proton acceptor in the catalytic mechanism. Lys177 contributes to the substrate binding site. Mg(2+) is bound by residues Lys201, Asp203, and Glu204. Lys201 is modified (N6-carboxylysine). Residue His294 is the Proton acceptor of the active site. Substrate contacts are provided by Arg295, His327, and Ser379.

Belongs to the RuBisCO large chain family. Type I subfamily. Heterohexadecamer of 8 large chains and 8 small chains. It depends on Mg(2+) as a cofactor.

The protein resides in the plastid. It is found in the chloroplast. The catalysed reaction is 2 (2R)-3-phosphoglycerate + 2 H(+) = D-ribulose 1,5-bisphosphate + CO2 + H2O. The enzyme catalyses D-ribulose 1,5-bisphosphate + O2 = 2-phosphoglycolate + (2R)-3-phosphoglycerate + 2 H(+). In terms of biological role, ruBisCO catalyzes two reactions: the carboxylation of D-ribulose 1,5-bisphosphate, the primary event in carbon dioxide fixation, as well as the oxidative fragmentation of the pentose substrate in the photorespiration process. Both reactions occur simultaneously and in competition at the same active site. This Jasminum nudiflorum (Winter jasmine) protein is Ribulose bisphosphate carboxylase large chain.